We begin with the raw amino-acid sequence, 135 residues long: Transcriptional regulator HosA (135 aa).

The HTH marR-type domain occupies 4–134; sequence RNKAFHQLRQ…FMQLVRKMMN (131 aa). The H-T-H motif DNA-binding region spans 48–71; it reads QVALIEAAVSTKATLAEMLARMEN.

Involved in the temperature-dependent positive control of flagellum-driven swimming motility and cellular aggregation. Regulates fliC expression by directly interacting with fliC promoter. The polypeptide is Transcriptional regulator HosA (hosA) (Escherichia coli O111:H-).